Reading from the N-terminus, the 392-residue chain is NADH dehydrogenase-like protein YjlD (392 aa).

The protein belongs to the NADH dehydrogenase family. Requires FAD as cofactor.

The sequence is that of NADH dehydrogenase-like protein YjlD (yjlD) from Bacillus subtilis (strain 168).